A 593-amino-acid chain; its full sequence is UvrABC system protein C (593 aa).

The region spanning 14 to 91 (DSPGCYLHKD…IQENMPKYNI (78 aa)) is the GIY-YIG domain. A UVR domain is found at 196-231 (NKIVNGLTEKMKSAAMTMEFERAAEYRDLIEAISLL).

This sequence belongs to the UvrC family. As to quaternary structure, interacts with UvrB in an incision complex.

The protein resides in the cytoplasm. Its function is as follows. The UvrABC repair system catalyzes the recognition and processing of DNA lesions. UvrC both incises the 5' and 3' sides of the lesion. The N-terminal half is responsible for the 3' incision and the C-terminal half is responsible for the 5' incision. This is UvrABC system protein C from Streptococcus agalactiae serotype V (strain ATCC BAA-611 / 2603 V/R).